The chain runs to 401 residues: Probable tRNA sulfurtransferase (401 aa).

One can recognise a THUMP domain in the interval 60 to 165 (EEICSLLKNI…EEATFLTIRN (106 aa)). Residues 183–184 (ML), 208–209 (HF), R265, G287, and Q296 contribute to the ATP site.

Belongs to the ThiI family.

The protein resides in the cytoplasm. It carries out the reaction [ThiI sulfur-carrier protein]-S-sulfanyl-L-cysteine + a uridine in tRNA + 2 reduced [2Fe-2S]-[ferredoxin] + ATP + H(+) = [ThiI sulfur-carrier protein]-L-cysteine + a 4-thiouridine in tRNA + 2 oxidized [2Fe-2S]-[ferredoxin] + AMP + diphosphate. The catalysed reaction is [ThiS sulfur-carrier protein]-C-terminal Gly-Gly-AMP + S-sulfanyl-L-cysteinyl-[cysteine desulfurase] + AH2 = [ThiS sulfur-carrier protein]-C-terminal-Gly-aminoethanethioate + L-cysteinyl-[cysteine desulfurase] + A + AMP + 2 H(+). It participates in cofactor biosynthesis; thiamine diphosphate biosynthesis. Its function is as follows. Catalyzes the ATP-dependent transfer of a sulfur to tRNA to produce 4-thiouridine in position 8 of tRNAs, which functions as a near-UV photosensor. Also catalyzes the transfer of sulfur to the sulfur carrier protein ThiS, forming ThiS-thiocarboxylate. This is a step in the synthesis of thiazole, in the thiamine biosynthesis pathway. The sulfur is donated as persulfide by IscS. In Bacillus velezensis (strain DSM 23117 / BGSC 10A6 / LMG 26770 / FZB42) (Bacillus amyloliquefaciens subsp. plantarum), this protein is Probable tRNA sulfurtransferase.